A 574-amino-acid polypeptide reads, in one-letter code: Egalitarian protein homolog (574 aa).

Positions 259–278 (LNEDGSENGSDEGEETNNNG) are disordered. Positions 262–273 (DGSENGSDEGEE) are enriched in acidic residues. A 3'-5' exonuclease domain is found at 312 to 414 (NMEKKVVGLD…SLLQHEKFNK (103 aa)).

Component of a dynein-regulating complex composed of at least bicd-1, dlc-1 and egal-1.

It is found in the nucleus envelope. Its function is as follows. Part of a complex with bicd-1 and dlc-1, which is recruited to the nuclear envelope by unc-83, where in turn, it recruits dynein to the nuclear surface and regulates nuclear migration in hypodermal precursor cells. The sequence is that of Egalitarian protein homolog from Caenorhabditis elegans.